The following is a 255-amino-acid chain: Hydroxyacylglutathione hydrolase (255 aa).

Histidine 53, histidine 55, aspartate 57, histidine 58, histidine 111, aspartate 128, and histidine 166 together coordinate Zn(2+).

It belongs to the metallo-beta-lactamase superfamily. Glyoxalase II family. In terms of assembly, monomer. The cofactor is Zn(2+).

The enzyme catalyses an S-(2-hydroxyacyl)glutathione + H2O = a 2-hydroxy carboxylate + glutathione + H(+). It participates in secondary metabolite metabolism; methylglyoxal degradation; (R)-lactate from methylglyoxal: step 2/2. Functionally, thiolesterase that catalyzes the hydrolysis of S-D-lactoyl-glutathione to form glutathione and D-lactic acid. This is Hydroxyacylglutathione hydrolase from Nitrosomonas eutropha (strain DSM 101675 / C91 / Nm57).